The chain runs to 204 residues: High frequency lysogenization protein HflD homolog (204 aa).

This sequence belongs to the HflD family.

It localises to the cytoplasm. It is found in the cell inner membrane. The chain is High frequency lysogenization protein HflD homolog from Shewanella sediminis (strain HAW-EB3).